The primary structure comprises 739 residues: TonB-dependent heme receptor A (739 aa).

An N-terminal signal peptide occupies residues 1 to 22; it reads MKMKKQCATLTFFIGLHGYTIA. In terms of domain architecture, TBDR plug spans 38 to 150; that stretch reads GHHERQPDRS…FAGTIKLETK (113 aa). The TBDR beta-barrel domain occupies 161 to 739; the sequence is LLGGLLKYGY…NIKLSISKQF (579 aa).

It belongs to the TonB-dependent receptor family.

The protein localises to the cell outer membrane. Its function is as follows. Heme receptor. The chain is TonB-dependent heme receptor A (tdhA) from Haemophilus ducreyi (strain 35000HP / ATCC 700724).